Here is a 387-residue protein sequence, read N- to C-terminus: Lipid-A-disaccharide synthase (387 aa).

Belongs to the LpxB family.

It catalyses the reaction a lipid X + a UDP-2-N,3-O-bis[(3R)-3-hydroxyacyl]-alpha-D-glucosamine = a lipid A disaccharide + UDP + H(+). It functions in the pathway bacterial outer membrane biogenesis; LPS lipid A biosynthesis. Condensation of UDP-2,3-diacylglucosamine and 2,3-diacylglucosamine-1-phosphate to form lipid A disaccharide, a precursor of lipid A, a phosphorylated glycolipid that anchors the lipopolysaccharide to the outer membrane of the cell. The chain is Lipid-A-disaccharide synthase from Glaesserella parasuis serovar 5 (strain SH0165) (Haemophilus parasuis).